Here is a 319-residue protein sequence, read N- to C-terminus: ADP-ribosyl cyclase/cyclic ADP-ribose hydrolase 2 (319 aa).

An N-terminal signal peptide occupies residues 1-33; the sequence is MAVQACALSLRLGLWMSLLLPVLPGAGARAAGA. Disulfide bonds link Cys-52-Cys-68, Cys-84-Cys-164, and Cys-145-Cys-158. 2 N-linked (GlcNAc...) asparagine glycosylation sites follow: Asn-67 and Asn-96. Trp-110 contacts NAD(+). Trp-110 serves as a coordination point for nicotinamide. Residue Asn-149 is glycosylated (N-linked (GlcNAc...) asparagine). NAD(+) is bound at residue Trp-173. Asn-193 carries N-linked (GlcNAc...) asparagine glycosylation. Glu-211 contributes to the NAD(+) binding site. 2 disulfides stabilise this stretch: Cys-239–Cys-260 and Cys-272–Cys-281. Ser-294 is lipidated: GPI-anchor amidated serine. Positions 295-319 are excised as a propeptide; sequence PALHAIGDISLIISLLVALASSSQA.

Belongs to the ADP-ribosyl cyclase family. Homodimer. As to expression, pancreatic islets, kidney, spleen, heart, thymus, intestine and salivary gland.

Its subcellular location is the cell membrane. The catalysed reaction is NAD(+) + H2O = ADP-D-ribose + nicotinamide + H(+). It carries out the reaction NAD(+) = cyclic ADP-beta-D-ribose + nicotinamide + H(+). It catalyses the reaction cyclic ADP-beta-D-ribose + H2O = ADP-D-ribose. Functionally, catalyzes both the synthesis of cyclic ADP-beta-D-ribose (cADPR) from NAD(+), and its hydrolysis to ADP-D-ribose (ADPR). Cyclic ADPR is known to serve as an endogenous second messenger that elicits calcium release from intracellular stores, and thus regulates the mobilization of intracellular calcium. May be involved in pre-B-cell growth. In Rattus norvegicus (Rat), this protein is ADP-ribosyl cyclase/cyclic ADP-ribose hydrolase 2 (Bst1).